The primary structure comprises 201 residues: Recombination protein RecR (201 aa).

A C4-type zinc finger spans residues 60–75 (CSECGNMDVSDPCTVC). Residues 83–178 (AAICVVETVG…SITSLARGVP (96 aa)) form the Toprim domain.

This sequence belongs to the RecR family.

Its function is as follows. May play a role in DNA repair. It seems to be involved in an RecBC-independent recombinational process of DNA repair. It may act with RecF and RecO. The chain is Recombination protein RecR from Maricaulis maris (strain MCS10) (Caulobacter maris).